A 323-amino-acid chain; its full sequence is MSHILTTDTLSPEQVAAVLALAEAVRDADGVAALSEQTLLRVRHGARGRGRFHLAYVDAEQGRVLAGCAFAEVSPGEPDSAEVAVAPQWRRHGLGRRLLDELWAHADARGLRVWAHGDLAPARALAASAGLQRMRALWKMRLPLRGTDSAPAATLPEPALRPEVAQQVEIRTFRVGVDEQEWLRTNARAFADHPEQGALTLEDLQQREQEPWFDPEGFFVAVDRGSGRIAGFHWTKVHDDGAGLTDGEPVGEVYVVGVDPDWQGSGLGRVLTLRGLHHLRDRGLPWVLLYVDEENRPAVQLYRSLGFELWESDVMYGRVPEER.

2 N-acetyltransferase domains span residues 5-145 (LTTD…LPLR) and 168-323 (VEIR…PEER). E36 contributes to the 1D-myo-inositol 2-(L-cysteinylamino)-2-deoxy-alpha-D-glucopyranoside binding site. 83–85 (VAV) provides a ligand contact to acetyl-CoA. 1D-myo-inositol 2-(L-cysteinylamino)-2-deoxy-alpha-D-glucopyranoside-binding residues include E195, K236, and E252. Residues 256-258 (VGV) and 263-269 (QGSGLGR) each bind acetyl-CoA. Y290 contributes to the 1D-myo-inositol 2-(L-cysteinylamino)-2-deoxy-alpha-D-glucopyranoside binding site. 295–300 (NRPAVQ) contacts acetyl-CoA.

The protein belongs to the acetyltransferase family. MshD subfamily. Monomer.

It catalyses the reaction 1D-myo-inositol 2-(L-cysteinylamino)-2-deoxy-alpha-D-glucopyranoside + acetyl-CoA = mycothiol + CoA + H(+). In terms of biological role, catalyzes the transfer of acetyl from acetyl-CoA to desacetylmycothiol (Cys-GlcN-Ins) to form mycothiol. The polypeptide is Mycothiol acetyltransferase (Thermobifida fusca (strain YX)).